A 302-amino-acid polypeptide reads, in one-letter code: Homoserine O-acetyltransferase (302 aa).

Residue cysteine 142 is the Acyl-thioester intermediate of the active site. The substrate site is built by lysine 163 and serine 192. The Proton acceptor role is filled by histidine 235. Glutamate 237 is an active-site residue. Arginine 249 serves as a coordination point for substrate.

It belongs to the MetA family.

Its subcellular location is the cytoplasm. It carries out the reaction L-homoserine + acetyl-CoA = O-acetyl-L-homoserine + CoA. The protein operates within amino-acid biosynthesis; L-methionine biosynthesis via de novo pathway; O-acetyl-L-homoserine from L-homoserine: step 1/1. In terms of biological role, transfers an acetyl group from acetyl-CoA to L-homoserine, forming acetyl-L-homoserine. The sequence is that of Homoserine O-acetyltransferase from Clostridium novyi (strain NT).